Consider the following 379-residue polypeptide: Eukaryotic translation initiation factor 3 subunit M (379 aa).

In terms of domain architecture, PCI spans 179–341; it reads RSEEASKVMI…RKVIISSVAQ (163 aa).

Belongs to the eIF-3 subunit M family. In terms of assembly, component of the eukaryotic translation initiation factor 3 (eIF-3) complex.

Its subcellular location is the cytoplasm. In terms of biological role, component of the eukaryotic translation initiation factor 3 (eIF-3) complex, which is involved in protein synthesis of a specialized repertoire of mRNAs and, together with other initiation factors, stimulates binding of mRNA and methionyl-tRNAi to the 40S ribosome. The eIF-3 complex specifically targets and initiates translation of a subset of mRNAs involved in cell proliferation. The sequence is that of Eukaryotic translation initiation factor 3 subunit M from Nematostella vectensis (Starlet sea anemone).